The chain runs to 313 residues: MEFKHQTVLLQEAISGLNVQNNGIYVDCTLGRAGHSLEILKHLPNGKLYCFEQDEAAIVVSEEILQKSKYRNYEIIKNNFVNLAAELQLRNVKAVNGILYDLGVSSPQLDDDKRGFSYRYDSPLDMRMNQHQGLTAKTVVNTYSQEALVKLFQDYGEEPFAKVIAKTIVIARNEQEIVTTFHLVEIIKKSLPQKILKKAKHPAKRVFQALRIEVNQELFVLQESLRQATTLLAVHGRLVVISFHSLEDRIVKKYFQSLTKDPNYEINQQLPAISYFESDYHIITKKVIVSSVTEQTNNHRSRSAKLRILERVK.

S-adenosyl-L-methionine is bound by residues 33 to 35 (AGH), Glu52, Phe80, Asp101, and Gln108.

The protein belongs to the methyltransferase superfamily. RsmH family.

The protein resides in the cytoplasm. The enzyme catalyses cytidine(1402) in 16S rRNA + S-adenosyl-L-methionine = N(4)-methylcytidine(1402) in 16S rRNA + S-adenosyl-L-homocysteine + H(+). In terms of biological role, specifically methylates the N4 position of cytidine in position 1402 (C1402) of 16S rRNA. The sequence is that of Ribosomal RNA small subunit methyltransferase H from Spiroplasma kunkelii.